Here is a 160-residue protein sequence, read N- to C-terminus: Cytochrome b6-f complex subunit 4 (160 aa).

The next 3 helical transmembrane spans lie at 36–56 (LLYI…GLAV), 95–115 (LLGI…PFIE), and 131–151 (AVFL…TLPI).

This sequence belongs to the cytochrome b family. PetD subfamily. As to quaternary structure, the 4 large subunits of the cytochrome b6-f complex are cytochrome b6, subunit IV (17 kDa polypeptide, PetD), cytochrome f and the Rieske protein, while the 4 small subunits are PetG, PetL, PetM and PetN. The complex functions as a dimer.

It localises to the cellular thylakoid membrane. Its function is as follows. Component of the cytochrome b6-f complex, which mediates electron transfer between photosystem II (PSII) and photosystem I (PSI), cyclic electron flow around PSI, and state transitions. The chain is Cytochrome b6-f complex subunit 4 from Trichodesmium erythraeum (strain IMS101).